Reading from the N-terminus, the 465-residue chain is Cysteine--tRNA ligase (465 aa).

Residue C30 coordinates Zn(2+). Positions 32-42 match the 'HIGH' region motif; that stretch reads ITVYDYCHVGH. Residues C214, H239, and E243 each contribute to the Zn(2+) site. Residues 271–275 carry the 'KMSKS' region motif; the sequence is KMSKS. Position 274 (K274) interacts with ATP.

It belongs to the class-I aminoacyl-tRNA synthetase family. Monomer. Zn(2+) is required as a cofactor.

It localises to the cytoplasm. It carries out the reaction tRNA(Cys) + L-cysteine + ATP = L-cysteinyl-tRNA(Cys) + AMP + diphosphate. The chain is Cysteine--tRNA ligase from Burkholderia multivorans (strain ATCC 17616 / 249).